The following is a 286-amino-acid chain: MIKPVQTELYAVIGNPVAHSLSPVMMNAAFRSMNVPATYLALQADELPEDLETLARFGFRGLSVTLPHKELAYRLADHVDDMARTIGAVNTLMREGSAWIGCNTDWLGATKALRRVTELEGREALILGAGGAARAVAFGMKREGARVTIANRCVEKGKALAKSFRCDFIPLAILDRARFDRHFDVVVQCTSVGLQGTIPTVLVSDSFFEPGMVVMETVYRPLRTPFLNAAKRAGATIVHGTDMLVYQGVAQLEWWLSRPIPEFPCVAAMKQAIHEVLSKEKNAQDD.

Shikimate is bound by residues 20–22 and threonine 65; that span reads SLS. Residue lysine 69 is the Proton acceptor of the active site. Aspartate 81 serves as a coordination point for NADP(+). Residues asparagine 90 and aspartate 105 each contribute to the shikimate site. NADP(+)-binding positions include 128–132 and threonine 217; that span reads GAGGA. Tyrosine 219 contacts shikimate. Glycine 240 serves as a coordination point for NADP(+).

It belongs to the shikimate dehydrogenase family. In terms of assembly, homodimer.

The catalysed reaction is shikimate + NADP(+) = 3-dehydroshikimate + NADPH + H(+). It participates in metabolic intermediate biosynthesis; chorismate biosynthesis; chorismate from D-erythrose 4-phosphate and phosphoenolpyruvate: step 4/7. Its function is as follows. Involved in the biosynthesis of the chorismate, which leads to the biosynthesis of aromatic amino acids. Catalyzes the reversible NADPH linked reduction of 3-dehydroshikimate (DHSA) to yield shikimate (SA). This chain is Shikimate dehydrogenase (NADP(+)), found in Syntrophobacter fumaroxidans (strain DSM 10017 / MPOB).